A 529-amino-acid chain; its full sequence is CTP synthase (529 aa).

Residues 1–270 (MKYIVVTGGV…ADVVCSYLSL (270 aa)) are amidoligase domain. Position 12 (serine 12) interacts with CTP. Serine 12 provides a ligand contact to UTP. ATP is bound by residues 13-18 (GLGKGI) and aspartate 70. Mg(2+) contacts are provided by aspartate 70 and glutamate 145. CTP contacts are provided by residues 152-154 (DIE), 191-196 (KTKPTQ), and lysine 227. UTP contacts are provided by residues 191 to 196 (KTKPTQ) and lysine 227. 243–245 (KDA) contacts ATP. The Glutamine amidotransferase type-1 domain occupies 293–525 (VAIVSKYGIE…VEACKKNKSS (233 aa)). Residue glycine 349 participates in L-glutamine binding. The Nucleophile; for glutamine hydrolysis role is filled by cysteine 376. L-glutamine-binding positions include 377-380 (LGFQ), glutamate 400, and arginine 455. Active-site residues include histidine 498 and glutamate 500.

This sequence belongs to the CTP synthase family. Homotetramer.

The enzyme catalyses UTP + L-glutamine + ATP + H2O = CTP + L-glutamate + ADP + phosphate + 2 H(+). The catalysed reaction is L-glutamine + H2O = L-glutamate + NH4(+). It catalyses the reaction UTP + NH4(+) + ATP = CTP + ADP + phosphate + 2 H(+). Its pathway is pyrimidine metabolism; CTP biosynthesis via de novo pathway; CTP from UDP: step 2/2. Its activity is regulated as follows. Allosterically activated by GTP, when glutamine is the substrate; GTP has no effect on the reaction when ammonia is the substrate. The allosteric effector GTP functions by stabilizing the protein conformation that binds the tetrahedral intermediate(s) formed during glutamine hydrolysis. Inhibited by the product CTP, via allosteric rather than competitive inhibition. In terms of biological role, catalyzes the ATP-dependent amination of UTP to CTP with either L-glutamine or ammonia as the source of nitrogen. Regulates intracellular CTP levels through interactions with the four ribonucleotide triphosphates. The sequence is that of CTP synthase from Methanoculleus marisnigri (strain ATCC 35101 / DSM 1498 / JR1).